A 203-amino-acid polypeptide reads, in one-letter code: EF-hand calcium-binding domain-containing protein 8 (203 aa).

The tract at residues 61–107 (SSEKPGESPKPQKMAQPGGSQKKETSRSVPVTDPTSHNSEINQRDQQ) is disordered. Polar residues predominate over residues 87–107 (RSVPVTDPTSHNSEINQRDQQ). 2 consecutive EF-hand domains span residues 111-145 (MHLADLQKVFEKEADENGALKKEGFIRIMKGVLSS) and 146-181 (MSEEMLELLFLKVDSDCNGFVTWQKYVDYMMREFQG).

The polypeptide is EF-hand calcium-binding domain-containing protein 8 (Efcab8) (Mus musculus (Mouse)).